The primary structure comprises 337 residues: tRNA N6-adenosine threonylcarbamoyltransferase (337 aa).

Fe cation contacts are provided by histidine 111 and histidine 115. Substrate contacts are provided by residues leucine 134 to glycine 138, aspartate 167, glycine 180, and asparagine 272. Aspartate 300 contributes to the Fe cation binding site.

The protein belongs to the KAE1 / TsaD family. Requires Fe(2+) as cofactor.

It is found in the cytoplasm. The enzyme catalyses L-threonylcarbamoyladenylate + adenosine(37) in tRNA = N(6)-L-threonylcarbamoyladenosine(37) in tRNA + AMP + H(+). In terms of biological role, required for the formation of a threonylcarbamoyl group on adenosine at position 37 (t(6)A37) in tRNAs that read codons beginning with adenine. Is involved in the transfer of the threonylcarbamoyl moiety of threonylcarbamoyl-AMP (TC-AMP) to the N6 group of A37, together with TsaE and TsaB. TsaD likely plays a direct catalytic role in this reaction. The chain is tRNA N6-adenosine threonylcarbamoyltransferase from Escherichia coli O45:K1 (strain S88 / ExPEC).